Consider the following 89-residue polypeptide: Small ribosomal subunit protein uS15 (89 aa).

The protein belongs to the universal ribosomal protein uS15 family. Part of the 30S ribosomal subunit. Forms a bridge to the 50S subunit in the 70S ribosome, contacting the 23S rRNA.

Functionally, one of the primary rRNA binding proteins, it binds directly to 16S rRNA where it helps nucleate assembly of the platform of the 30S subunit by binding and bridging several RNA helices of the 16S rRNA. Its function is as follows. Forms an intersubunit bridge (bridge B4) with the 23S rRNA of the 50S subunit in the ribosome. The sequence is that of Small ribosomal subunit protein uS15 from Chlorobium phaeobacteroides (strain DSM 266 / SMG 266 / 2430).